The sequence spans 82 residues: Putative antitoxin Saci_0468 (82 aa).

This sequence belongs to the UPF0330 family.

Its function is as follows. Possibly the antitoxin component of a type II toxin-antitoxin (TA) system. The chain is Putative antitoxin Saci_0468 from Sulfolobus acidocaldarius (strain ATCC 33909 / DSM 639 / JCM 8929 / NBRC 15157 / NCIMB 11770).